The following is a 453-amino-acid chain: CAAX prenyl protease 1 (453 aa).

Over 1–12 the chain is Lumenal; it reads MFDLKTILDHPN. Residues 13-33 form a helical membrane-spanning segment; it reads IPWKLIISGFSIAQFSFESYL. Over 34–89 the chain is Cytoplasmic; that stretch reads TYRQYQKLSETKLPPVLEDEIDDETFHKSRNYSRAKAKFSIFGDVYNLAQKLVFIK. Residues 90-110 form a helical membrane-spanning segment; that stretch reads YDLFPKIWHMAVSLLNAVLPV. Residues 111-121 lie on the Lumenal side of the membrane; that stretch reads RFHMVSTVAQS. Residues 122-142 form a helical membrane-spanning segment; sequence LCFLGLLSSLSTLVDLPLSYY. Topologically, residues 143–167 are cytoplasmic; the sequence is SHFVLEEKFGFNKLTVQLWITDMIK. The chain crosses the membrane as a helical span at residues 168 to 188; that stretch reads SLTLAYAIGGPILYLFLKIFD. Topologically, residues 189 to 197 are lumenal; sequence KFPTDFLWY. The chain crosses the membrane as a helical span at residues 198–218; it reads IMVFLFVVQILAMTIIPVFIM. Residues 219–306 are Cytoplasmic-facing; that stretch reads PMFNKFTPLE…HEIGHWQKNH (88 aa). Residue H297 participates in Zn(2+) binding. The active site involves E298. Residue H301 coordinates Zn(2+). A helical membrane pass occupies residues 307–327; that stretch reads IVNMVIFSQLHTFLIFSLFTS. Over 328-357 the chain is Lumenal; sequence IYRNTSFYNTFGFFLEKSTGSFVDPVITKE. A helical transmembrane segment spans residues 358-378; the sequence is FPIIIGFMLFNDLLTPLECAM. Over 379 to 453 the chain is Cytoplasmic; that stretch reads QFVMSLISRT…LDYVSEKKKN (75 aa). Residue E390 coordinates Zn(2+). The active-site Proton donor is D394.

It belongs to the peptidase M48A family. The cofactor is Zn(2+).

It is found in the endoplasmic reticulum membrane. The enzyme catalyses Hydrolyzes the peptide bond -P2-(S-farnesyl or geranylgeranyl)C-P1'-P2'-P3'-COOH where P1' and P2' are amino acids with aliphatic side chains and P3' is any C-terminal residue.. Its function is as follows. Proteolytically removes the C-terminal three residues of farnesylated A-factor mating pheromone. Also acts to cleave the N-terminal extension of the pheromone. Does not act on Ras. The sequence is that of CAAX prenyl protease 1 (STE24) from Saccharomyces cerevisiae (strain ATCC 204508 / S288c) (Baker's yeast).